A 310-amino-acid polypeptide reads, in one-letter code: MAKVNGETLDIMIEQSDQPTFKDYVTLAKMGIVRANLITVFAGYVVAASYLTDDVLLYLWQTKLTLLWTLLGSGLVIAGSCYLNNYIDRDIDYKMERTMGRPSVTGKMDGQRILALGLGILATGTVLLLIVNHVAAVFGLIGSFVYVVIYTMWLKRTHTINTVVGGISGAVPPIIGFAAVTPTLHIDAWILFLIMFVWQPPHFLALAMRRTEEYRAAGIPMLPVVNGFAITKRQIVWWIAVLLPSSLLLAHYGIIYMLVMAVLGGYWLYMGLKGLKIKEEQAEIKWASKMFFFSLFYFTAWIVTVVLVSL.

The next 9 helical transmembrane spans lie at 37-57 (LITV…DVLL), 64-84 (LTLL…CYLN), 113-133 (ILAL…IVNH), 134-154 (VAAV…TMWL), 159-181 (TINT…AAVT), 186-208 (IDAW…ALAM), 215-237 (RAAG…QIVW), 257-277 (MLVM…GLKI), and 290-310 (MFFF…LVSL).

The protein belongs to the UbiA prenyltransferase family. Protoheme IX farnesyltransferase subfamily. In terms of assembly, interacts with CtaA.

The protein resides in the cell membrane. It carries out the reaction heme b + (2E,6E)-farnesyl diphosphate + H2O = Fe(II)-heme o + diphosphate. It participates in porphyrin-containing compound metabolism; heme O biosynthesis; heme O from protoheme: step 1/1. Converts heme B (protoheme IX) to heme O by substitution of the vinyl group on carbon 2 of heme B porphyrin ring with a hydroxyethyl farnesyl side group. This Exiguobacterium sibiricum (strain DSM 17290 / CCUG 55495 / CIP 109462 / JCM 13490 / 255-15) protein is Protoheme IX farnesyltransferase.